Consider the following 1343-residue polypeptide: DNA-directed RNA polymerase subunit beta (1343 aa).

Belongs to the RNA polymerase beta chain family. As to quaternary structure, the RNAP catalytic core consists of 2 alpha, 1 beta, 1 beta' and 1 omega subunit. When a sigma factor is associated with the core the holoenzyme is formed, which can initiate transcription.

It carries out the reaction RNA(n) + a ribonucleoside 5'-triphosphate = RNA(n+1) + diphosphate. Its function is as follows. DNA-dependent RNA polymerase catalyzes the transcription of DNA into RNA using the four ribonucleoside triphosphates as substrates. This chain is DNA-directed RNA polymerase subunit beta, found in Haemophilus influenzae (strain PittGG).